Here is a 2609-residue protein sequence, read N- to C-terminus: Mycosubtilin synthase subunit C (2609 aa).

The interval 258 to 1628 (PREKTIHQLF…RVCAQPEMTV (1371 aa)) is domain 1 (D-serine-activating). Positions 288 to 695 (TYQELNEKAN…HIPSIQESIV (408 aa)) are adenylation 1. The 75-residue stretch at 771–845 (APRTELEKIL…ELVPYVEPVT (75 aa)) folds into the Carrier 1 domain. Residue Ser-806 is modified to O-(pantetheine 4'-phosphoryl)serine. Positions 853–1312 (IKGPALLTPI…EISIDELDQF (460 aa)) are epimerization 1. Positions 1322-1623 (IENIYPLTPM…NTIPVRVCAQ (302 aa)) are condensation 1. Residues 1778–2359 (PKEKTIYQLF…AHAIQAAALP (582 aa)) form a domain 2 (isoleucine-activating) region. Residues 1808 to 2205 (TYRQLNEQAN…LVESVKEAVV (398 aa)) are adenylation 2. The Carrier 2 domain occupies 2282–2357 (APRTLIEKQL…TMAHAIQAAA (76 aa)). At Ser-2317 the chain carries O-(pantetheine 4'-phosphoryl)serine. The thioesterase stretch occupies residues 2375 to 2581 (IPVFCFPPLI…ENMSTIRSIM (207 aa)).

It belongs to the ATP-dependent AMP-binding enzyme family. The cofactor is pantetheine 4'-phosphate.

Its function is as follows. This protein is a multifunctional enzyme, able to activate and polymerize the amino acids Ser and Asn as part of the synthesis of mycosubtilin. The Ser residue is further epimerized to the D-isomer form. The activation sites for these amino acids consist of individual domains. The sequence is that of Mycosubtilin synthase subunit C (mycC) from Bacillus subtilis.